Reading from the N-terminus, the 591-residue chain is 2-succinyl-5-enolpyruvyl-6-hydroxy-3-cyclohexene-1-carboxylate synthase (591 aa).

It belongs to the TPP enzyme family. MenD subfamily. As to quaternary structure, homodimer. Requires Mg(2+) as cofactor. The cofactor is Mn(2+). Thiamine diphosphate serves as cofactor.

The enzyme catalyses isochorismate + 2-oxoglutarate + H(+) = 5-enolpyruvoyl-6-hydroxy-2-succinyl-cyclohex-3-ene-1-carboxylate + CO2. The protein operates within quinol/quinone metabolism; 1,4-dihydroxy-2-naphthoate biosynthesis; 1,4-dihydroxy-2-naphthoate from chorismate: step 2/7. It functions in the pathway cofactor biosynthesis; phylloquinone biosynthesis. Its function is as follows. Catalyzes the thiamine diphosphate-dependent decarboxylation of 2-oxoglutarate and the subsequent addition of the resulting succinic semialdehyde-thiamine pyrophosphate anion to isochorismate to yield 2-succinyl-5-enolpyruvyl-6-hydroxy-3-cyclohexene-1-carboxylate (SEPHCHC). The polypeptide is 2-succinyl-5-enolpyruvyl-6-hydroxy-3-cyclohexene-1-carboxylate synthase (Rippkaea orientalis (strain PCC 8801 / RF-1) (Cyanothece sp. (strain PCC 8801))).